Here is a 344-residue protein sequence, read N- to C-terminus: Nicotinate-nucleotide--dimethylbenzimidazole phosphoribosyltransferase (344 aa).

Glu310 functions as the Proton acceptor in the catalytic mechanism.

It belongs to the CobT family.

It carries out the reaction 5,6-dimethylbenzimidazole + nicotinate beta-D-ribonucleotide = alpha-ribazole 5'-phosphate + nicotinate + H(+). It participates in nucleoside biosynthesis; alpha-ribazole biosynthesis; alpha-ribazole from 5,6-dimethylbenzimidazole: step 1/2. Its function is as follows. Catalyzes the synthesis of alpha-ribazole-5'-phosphate from nicotinate mononucleotide (NAMN) and 5,6-dimethylbenzimidazole (DMB). The sequence is that of Nicotinate-nucleotide--dimethylbenzimidazole phosphoribosyltransferase from Shewanella amazonensis (strain ATCC BAA-1098 / SB2B).